The sequence spans 300 residues: Acetaldehyde dehydrogenase 1 (300 aa).

Position 11 to 14 (11 to 14 (SGNI)) interacts with NAD(+). Cys-126 functions as the Acyl-thioester intermediate in the catalytic mechanism. NAD(+)-binding positions include 157–165 (SAGPGTRAN) and Asn-276.

Belongs to the acetaldehyde dehydrogenase family.

The catalysed reaction is acetaldehyde + NAD(+) + CoA = acetyl-CoA + NADH + H(+). The protein is Acetaldehyde dehydrogenase 1 of Rhodococcus erythropolis (strain PR4 / NBRC 100887).